The primary structure comprises 209 residues: Mitochondrial import inner membrane translocase subunit Tim23 (209 aa).

3 helical membrane-spanning segments follow: residues 73 to 93, 125 to 145, and 180 to 200; these read FELA…FGAV, ALWA…GVII, and GGLA…WEHI.

The protein belongs to the Tim17/Tim22/Tim23 family. Component of the TIM23 complex at least composed of timm23, timm17 and timm50. The complex interacts with the timm44 component of the PAM complex.

It localises to the mitochondrion inner membrane. Essential component of the TIM23 complex, a complex that mediates the translocation of transit peptide-containing proteins across the mitochondrial inner membrane. The protein is Mitochondrial import inner membrane translocase subunit Tim23 (timm23) of Xenopus tropicalis (Western clawed frog).